The chain runs to 326 residues: ELAV-like protein 1 (326 aa).

Residue serine 2 is modified to N-acetylserine. Serine 2 bears the Phosphoserine mark. Residues 20–98 (TNLIVNYLPQ…KTIKVSYARP (79 aa)) enclose the RRM 1 domain. Residues serine 100 and serine 158 each carry the phosphoserine modification. Residues 106-186 (ANLYISGLPR…EPITVKFAAN (81 aa)) enclose the RRM 2 domain. Lysine 191 is covalently cross-linked (Glycyl lysine isopeptide (Lys-Gly) (interchain with G-Cter in SUMO2)). Phosphoserine is present on residues serine 197 and serine 202. Arginine 206 carries the omega-N-methylarginine modification. Asymmetric dimethylarginine; by CARM1; alternate is present on arginine 217. Arginine 217 is modified (omega-N-methylarginine; alternate). Phosphoserine occurs at positions 221 and 318. The RRM 3 domain occupies 244–322 (WCIFIYNLGQ…KILQVSFKTN (79 aa)).

This sequence belongs to the RRM elav family. In terms of assembly, monomer and homodimer (in vitro). Interacts with ANP32A. Interacts with ZNF385A; the interaction is indirect and mRNA-dependent and may regulate p53/TP53 expression. Identified in a mRNP complex, at least composed of DHX9, DDX3X, ELAVL1, HNRNPU, IGF2BP1, ILF3, PABPC1, PCBP2, PTBP2, STAU1, STAU2, SYNCRIP and YBX1. Interacts with AGO1 and AGO2. Interacts with IGF2BP1; the interaction is enhanced by SEPIN14P20 peptide RBPR. Interacts with IGF2BP2 and IGF2BP3. Interacts with HNRNPL. Interacts with DHX36; this interaction occurs in a RNA-dependent manner. Interacts with ILF3; this interaction occurs in a RNA-dependent manner. Interacts with PLEKHN1. Interacts with SHFL; the interaction increases in presence of RNA. Interacts with YBX1; interaction recruits ELAVL1 on C5-methylcytosine (m5C)-containing mRNAs, thereby promoting mRNA stability. Interacts with FXR1. Phosphorylated by MAPKAPK2. Phosphorylated by PRKCD. Post-translationally, methylated at Arg-217 by CARM1 in macrophages in response to LPS challenge. In terms of tissue distribution, ubiquitous. Detected in brain, liver, thymus and muscle.

The protein localises to the cytoplasm. Its subcellular location is the nucleus. It is found in the stress granule. The protein resides in the P-body. Functionally, RNA-binding protein that binds to the 3'-UTR region of mRNAs and increases their stability. Involved in embryonic stem cell (ESC) differentiation: preferentially binds mRNAs that are not methylated by N6-methyladenosine (m6A), stabilizing them, promoting ESC differentiation. Has also been shown to be capable of binding to m6A-containing mRNAs and contributes to MYC stability by binding to m6A-containing MYC mRNAs. Binds to poly-U elements and AU-rich elements (AREs) in the 3'-UTR of target mRNAs. Binds avidly to the AU-rich element in FOS and IL3/interleukin-3 mRNAs. In the case of the FOS AU-rich element, binds to a core element of 27 nucleotides that contain AUUUA, AUUUUA, and AUUUUUA motifs. Binds preferentially to the 5'-UUUU[AG]UUU-3' motif in vitro. With ZNF385A, binds the 3'-UTR of p53/TP53 mRNA to control their nuclear export induced by CDKN2A. Hence, may regulate p53/TP53 expression and mediate in part the CDKN2A anti-proliferative activity. May also bind with ZNF385A the CCNB1 mRNA. Increases the stability of the leptin mRNA harboring an AU-rich element (ARE) in its 3' UTR. The protein is ELAV-like protein 1 (ELAVL1) of Homo sapiens (Human).